Consider the following 621-residue polypeptide: Interleukin-1 receptor-associated kinase-like 2 (621 aa).

The 82-residue stretch at 13 to 94 (LDDLCRNMDT…RAAQIILNWK (82 aa)) folds into the Death domain. The segment at 113–175 (GKPLAASVRN…TASADSKDFS (63 aa)) is disordered. Polar residues predominate over residues 157-169 (ASSSLKTNQTASA). In terms of domain architecture, Protein kinase spans 206–476 (FNPSHKISEG…AEALVMAACL (271 aa)). Residues 212 to 220 (ISEGTFADV), K233, and 333 to 336 (KSSN) contribute to the ATP site. Polar residues predominate over residues 503–522 (ETSLPCSGLSEGTGSSFNTP). Residues 503–534 (ETSLPCSGLSEGTGSSFNTPEETDDVDNSSFD) form a disordered region.

It belongs to the protein kinase superfamily. TKL Ser/Thr protein kinase family. Pelle subfamily. In terms of assembly, interacts with MYD88. IL-1 stimulation leads to the formation of a signaling complex which dissociates from the IL-1 receptor following the binding of PELI1.

Functionally, binds to the IL-1 type I receptor following IL-1 engagement, triggering intracellular signaling cascades leading to transcriptional up-regulation and mRNA stabilization. The protein is Interleukin-1 receptor-associated kinase-like 2 (IRAK2) of Bos taurus (Bovine).